Reading from the N-terminus, the 246-residue chain is Probable transcriptional regulatory protein YebC (246 aa).

Positions 1-20 (MAGHSKWANTRHRKAAQDAK) are disordered.

This sequence belongs to the TACO1 family.

The protein resides in the cytoplasm. This chain is Probable transcriptional regulatory protein YebC, found in Escherichia coli O6:K15:H31 (strain 536 / UPEC).